The primary structure comprises 215 residues: MSETVPPAPAASAAPEKPLAGKKAKKPAKAAAASKKKPAGPSVSELIVQAASSSKERGGVSLAALKKALAAAGYDVEKNNSRIKLGIKSLVSKGTLVQTKGTGASGSFKLNKKASSVETKPGASKVATKTKATGASKKLKKATGASKKSVKTPKKAKKPAATRKSSKNPKKPKTVKPKKVAKSPAKAKAVKPKAAKARVTKPKTAKPKKAAPKKK.

The disordered stretch occupies residues 1-43; that stretch reads MSETVPPAPAASAAPEKPLAGKKAKKPAKAAAASKKKPAGPSV. S2 carries the post-translational modification N-acetylserine. S2 and S12 each carry phosphoserine. K17 bears the N6-acetyllysine mark. Basic residues predominate over residues 20–38; that stretch reads AGKKAKKPAKAAAASKKKP. K37 carries the post-translational modification N6-(beta-hydroxybutyryl)lysine. Residues 39–112 form the H15 domain; it reads AGPSVSELIV…GASGSFKLNK (74 aa). Phosphoserine is present on S44. The residue at position 55 (K55) is an N6-(beta-hydroxybutyryl)lysine. A Citrulline modification is found at R57. K67 is modified (N6-(beta-hydroxybutyryl)lysine). An N6-acetyllysine modification is found at K78. At K88 the chain carries N6-(beta-hydroxybutyryl)lysine. K93 bears the N6-(beta-hydroxybutyryl)lysine; alternate mark. N6-acetyllysine; alternate is present on K93. The disordered stretch occupies residues 94 to 215; it reads GTLVQTKGTG…KPKKAAPKKK (122 aa). Residue S107 is modified to Phosphoserine. The residue at position 109 (K109) is an N6-(beta-hydroxybutyryl)lysine. Positions 122–147 are enriched in low complexity; it reads GASKVATKTKATGASKKLKKATGASK. K125 is subject to N6-acetyllysine. Composition is skewed to basic residues over residues 148-181 and 188-215; these read KSVKTPKKAKKPAATRKSSKNPKKPKTVKPKKVA and KAVKPKAAKARVTKPKTAKPKKAAPKKK. The residue at position 204 (T204) is a Phosphothreonine.

The protein belongs to the histone H1/H5 family. In terms of assembly, interacts with DFFB. Post-translationally, H1 histones are progressively phosphorylated during the cell cycle, becoming maximally phosphorylated during late G2 phase and M phase, and being dephosphorylated sharply thereafter. Citrullination at Arg-57 (H1R54ci) by PADI4 takes place within the DNA-binding site of H1 and results in its displacement from chromatin and global chromatin decondensation, thereby promoting pluripotency and stem cell maintenance.

The protein localises to the nucleus. It localises to the chromosome. In terms of biological role, histone H1 protein binds to linker DNA between nucleosomes forming the macromolecular structure known as the chromatin fiber. Histones H1 are necessary for the condensation of nucleosome chains into higher-order structured fibers. Also acts as a regulator of individual gene transcription through chromatin remodeling, nucleosome spacing and DNA methylation. The chain is Histone H1.1 from Homo sapiens (Human).